A 95-amino-acid chain; its full sequence is Co-chaperonin GroES (95 aa).

This sequence belongs to the GroES chaperonin family. Heptamer of 7 subunits arranged in a ring. Interacts with the chaperonin GroEL.

Its subcellular location is the cytoplasm. Its function is as follows. Together with the chaperonin GroEL, plays an essential role in assisting protein folding. The GroEL-GroES system forms a nano-cage that allows encapsulation of the non-native substrate proteins and provides a physical environment optimized to promote and accelerate protein folding. GroES binds to the apical surface of the GroEL ring, thereby capping the opening of the GroEL channel. This Geobacter sulfurreducens (strain ATCC 51573 / DSM 12127 / PCA) protein is Co-chaperonin GroES.